The chain runs to 177 residues: Parathyroid hormone-related protein (177 aa).

The N-terminal stretch at 1-24 is a signal peptide; the sequence is MLRRLVQQWSVLVFLLSYSVPSRG. The propeptide occupies 25 to 34; that stretch reads RSVEGLGRRL. The important for receptor binding stretch occupies residues 57-68; sequence RFFLHHLIAEIH. The disordered stretch occupies residues 74–177; sequence ATSEVSPNSK…TSLEPSSRTH (104 aa). The segment covering 76 to 90 has biased composition (polar residues); the sequence is SEVSPNSKPAPNTKN. The Nuclear localization signal motif lies at 108–129; it reads TNKVETYKEQPLKTPGKKKKGK. A compositionally biased stretch (basic and acidic residues) spans 109 to 118; that stretch reads NKVETYKEQP. Basic residues predominate over residues 122–132; it reads PGKKKKGKPGK. Low complexity predominate over residues 161-177; the sequence is PHTSPTSTSLEPSSRTH.

This sequence belongs to the parathyroid hormone family. In terms of assembly, PTHrP interacts with PTH1R (via N-terminal extracellular domain). Post-translationally, there are several secretory forms, including osteostatin, arising from endoproteolytic cleavage of the initial translation product. Each of these secretory forms is believed to have one or more of its own receptors that mediates the normal paracrine, autocrine and endocrine actions.

It is found in the secreted. Its subcellular location is the cytoplasm. The protein resides in the nucleus. Functionally, neuroendocrine peptide which is a critical regulator of cellular and organ growth, development, migration, differentiation and survival and of epithelial calcium ion transport. Acts by binding to its receptor, PTH1R, activating G protein-coupled receptor signaling. Regulates endochondral bone development and epithelial-mesenchymal interactions during the formation of the mammary glands and teeth. Required for skeletal homeostasis. Promotes mammary mesenchyme differentiation and bud outgrowth by modulating mesenchymal cell responsiveness to BMPs. Up-regulates BMPR1A expression in the mammary mesenchyme and this increases the sensitivity of these cells to BMPs and allows them to respond to BMP4 in a paracrine and/or autocrine fashion. BMP4 signaling in the mesenchyme, in turn, triggers epithelial outgrowth and augments MSX2 expression, which causes the mammary mesenchyme to inhibit hair follicle formation within the nipple sheath. In terms of biological role, potent inhibitor of osteoclastic bone resorption. The sequence is that of Parathyroid hormone-related protein (Pthlh) from Rattus norvegicus (Rat).